A 135-amino-acid polypeptide reads, in one-letter code: ATP synthase epsilon chain (135 aa).

This sequence belongs to the ATPase epsilon chain family. In terms of assembly, F-type ATPases have 2 components, CF(1) - the catalytic core - and CF(0) - the membrane proton channel. CF(1) has five subunits: alpha(3), beta(3), gamma(1), delta(1), epsilon(1). CF(0) has three main subunits: a, b and c.

The protein localises to the cell inner membrane. Functionally, produces ATP from ADP in the presence of a proton gradient across the membrane. The chain is ATP synthase epsilon chain from Rhizobium rhizogenes (strain K84 / ATCC BAA-868) (Agrobacterium radiobacter).